The primary structure comprises 396 residues: Acetate kinase (396 aa).

Residue Asn-7 participates in Mg(2+) binding. Residue Lys-14 participates in ATP binding. Position 89 (Arg-89) interacts with substrate. Asp-146 acts as the Proton donor/acceptor in catalysis. Residues 206–210 (HLGNG), 280–282 (DLR), and 328–332 (GIGEN) contribute to the ATP site. Mg(2+) is bound at residue Glu-382.

Belongs to the acetokinase family. As to quaternary structure, homodimer. Mg(2+) is required as a cofactor. It depends on Mn(2+) as a cofactor.

It localises to the cytoplasm. It carries out the reaction acetate + ATP = acetyl phosphate + ADP. The protein operates within metabolic intermediate biosynthesis; acetyl-CoA biosynthesis; acetyl-CoA from acetate: step 1/2. In terms of biological role, catalyzes the formation of acetyl phosphate from acetate and ATP. Can also catalyze the reverse reaction. This Maridesulfovibrio salexigens (strain ATCC 14822 / DSM 2638 / NCIMB 8403 / VKM B-1763) (Desulfovibrio salexigens) protein is Acetate kinase.